Consider the following 340-residue polypeptide: TD and POZ domain-containing protein 5 (340 aa).

The MATH domain maps to 19-149 (EFCYVWTIRN…ENKLTLCCKV (131 aa)). In terms of domain architecture, BTB spans 188–255 (TDCCLLVAGH…IYTGKAPHLQ (68 aa)).

The protein belongs to the Tdpoz family.

In Mus musculus (Mouse), this protein is TD and POZ domain-containing protein 5.